The chain runs to 294 residues: Homoserine kinase (294 aa).

ATP is bound at residue arginine 83–alanine 93.

Belongs to the GHMP kinase family. Homoserine kinase subfamily.

The protein resides in the cytoplasm. The enzyme catalyses L-homoserine + ATP = O-phospho-L-homoserine + ADP + H(+). Its pathway is amino-acid biosynthesis; L-threonine biosynthesis; L-threonine from L-aspartate: step 4/5. In terms of biological role, catalyzes the ATP-dependent phosphorylation of L-homoserine to L-homoserine phosphate. This Pyrococcus abyssi (strain GE5 / Orsay) protein is Homoserine kinase.